Reading from the N-terminus, the 580-residue chain is Proline--tRNA ligase (580 aa).

It belongs to the class-II aminoacyl-tRNA synthetase family. ProS type 1 subfamily. Homodimer.

The protein localises to the cytoplasm. The enzyme catalyses tRNA(Pro) + L-proline + ATP = L-prolyl-tRNA(Pro) + AMP + diphosphate. In terms of biological role, catalyzes the attachment of proline to tRNA(Pro) in a two-step reaction: proline is first activated by ATP to form Pro-AMP and then transferred to the acceptor end of tRNA(Pro). As ProRS can inadvertently accommodate and process non-cognate amino acids such as alanine and cysteine, to avoid such errors it has two additional distinct editing activities against alanine. One activity is designated as 'pretransfer' editing and involves the tRNA(Pro)-independent hydrolysis of activated Ala-AMP. The other activity is designated 'posttransfer' editing and involves deacylation of mischarged Ala-tRNA(Pro). The misacylated Cys-tRNA(Pro) is not edited by ProRS. This is Proline--tRNA ligase from Maridesulfovibrio salexigens (strain ATCC 14822 / DSM 2638 / NCIMB 8403 / VKM B-1763) (Desulfovibrio salexigens).